The chain runs to 469 residues: Diacetylchitobiose binding protein NgcE (469 aa).

The tat-type signal signal peptide spans 1-37; that stretch reads MTIRAGSLDRRTLLRGAIATAAMGSFAVACSSPSSED. The tract at residues 30–54 is disordered; it reads CSSPSSEDKESDSGPKGEKSANNPF. Basic and acidic residues predominate over residues 35–48; that stretch reads SEDKESDSGPKGEK.

This sequence belongs to the bacterial solute-binding protein 1 family. As to quaternary structure, the complex is composed of two ATP-binding proteins (MsiK), two transmembrane proteins (NgcF and NgcG) and a solute-binding protein (NgcE). Predicted to be exported by the Tat system. The position of the signal peptide cleavage has not been experimentally proven.

The protein localises to the cell membrane. In terms of biological role, part of the ABC transporter complex NgcEFG-MsiK involved in N,N'-diacetylchitobiose ((GlcNAc)2) uptake. Binds (GlcNAc)2. Can also bind GlcNAc. In Streptomyces coelicolor (strain ATCC BAA-471 / A3(2) / M145), this protein is Diacetylchitobiose binding protein NgcE.